Reading from the N-terminus, the 1163-residue chain is Carbamoyl phosphate synthase large chain (1163 aa).

The segment at 1–456 (MPKRQDIKSI…SLQKALRGLE (456 aa)) is carboxyphosphate synthetic domain. Arginine 129 provides a ligand contact to ATP. The segment at 148 to 170 (LANATDIKDHDRKSHEAERSALK) is disordered. Residues 153-170 (DIKDHDRKSHEAERSALK) are compositionally biased toward basic and acidic residues. An ATP-grasp 1 domain is found at 185-381 (LENQWNLGEG…IAKIAAKLAV (197 aa)). ATP-binding residues include arginine 222, glycine 228, glycine 229, glutamate 261, valine 263, glutamate 268, glycine 294, valine 295, histidine 296, glutamine 338, and glutamate 352. Mg(2+) is bound by residues glutamine 338, glutamate 352, and asparagine 354. The Mn(2+) site is built by glutamine 338, glutamate 352, and asparagine 354. The segment at 457 to 614 (TGLTGLDEIE…PFVGAARSEA (158 aa)) is oligomerization domain. Residues 615 to 1026 (QVSDRKKVVI…AFAKSQLGAG (412 aa)) form a carbamoyl phosphate synthetic domain region. One can recognise an ATP-grasp 2 domain in the interval 743 to 955 (QKLLMKLDLN…IAKIAARVMA (213 aa)). Positions 779, 839, 841, 846, 871, 872, 873, 874, 914, and 926 each coordinate ATP. 3 residues coordinate Mg(2+): glutamine 914, glutamate 926, and asparagine 928. Glutamine 914, glutamate 926, and asparagine 928 together coordinate Mn(2+). The region spanning 1027 to 1163 (VDLPRDGTVF…VRPLQSYFET (137 aa)) is the MGS-like domain. The allosteric domain stretch occupies residues 1027 to 1163 (VDLPRDGTVF…VRPLQSYFET (137 aa)).

This sequence belongs to the CarB family. Composed of two chains; the small (or glutamine) chain promotes the hydrolysis of glutamine to ammonia, which is used by the large (or ammonia) chain to synthesize carbamoyl phosphate. Tetramer of heterodimers (alpha,beta)4. Mg(2+) is required as a cofactor. It depends on Mn(2+) as a cofactor.

The catalysed reaction is hydrogencarbonate + L-glutamine + 2 ATP + H2O = carbamoyl phosphate + L-glutamate + 2 ADP + phosphate + 2 H(+). It catalyses the reaction hydrogencarbonate + NH4(+) + 2 ATP = carbamoyl phosphate + 2 ADP + phosphate + 2 H(+). It functions in the pathway amino-acid biosynthesis; L-arginine biosynthesis; carbamoyl phosphate from bicarbonate: step 1/1. The protein operates within pyrimidine metabolism; UMP biosynthesis via de novo pathway; (S)-dihydroorotate from bicarbonate: step 1/3. In terms of biological role, large subunit of the glutamine-dependent carbamoyl phosphate synthetase (CPSase). CPSase catalyzes the formation of carbamoyl phosphate from the ammonia moiety of glutamine, carbonate, and phosphate donated by ATP, constituting the first step of 2 biosynthetic pathways, one leading to arginine and/or urea and the other to pyrimidine nucleotides. The large subunit (synthetase) binds the substrates ammonia (free or transferred from glutamine from the small subunit), hydrogencarbonate and ATP and carries out an ATP-coupled ligase reaction, activating hydrogencarbonate by forming carboxy phosphate which reacts with ammonia to form carbamoyl phosphate. This is Carbamoyl phosphate synthase large chain from Rhizobium meliloti (strain 1021) (Ensifer meliloti).